A 256-amino-acid chain; its full sequence is tRNA-cytidine(32) 2-sulfurtransferase 1 (256 aa).

A PP-loop motif motif is present at residues 38 to 43; that stretch reads SGGKDS. [4Fe-4S] cluster is bound by residues Cys113, Cys116, and Cys204.

It belongs to the TtcA family. As to quaternary structure, homodimer. The cofactor is Mg(2+). [4Fe-4S] cluster serves as cofactor.

The protein localises to the cytoplasm. The enzyme catalyses cytidine(32) in tRNA + S-sulfanyl-L-cysteinyl-[cysteine desulfurase] + AH2 + ATP = 2-thiocytidine(32) in tRNA + L-cysteinyl-[cysteine desulfurase] + A + AMP + diphosphate + H(+). It functions in the pathway tRNA modification. Its function is as follows. Catalyzes the ATP-dependent 2-thiolation of cytidine in position 32 of tRNA, to form 2-thiocytidine (s(2)C32). The sulfur atoms are provided by the cysteine/cysteine desulfurase (IscS) system. The chain is tRNA-cytidine(32) 2-sulfurtransferase 1 from Francisella philomiragia subsp. philomiragia (strain ATCC 25017 / CCUG 19701 / FSC 153 / O#319-036).